A 259-amino-acid polypeptide reads, in one-letter code: Thiazole synthase (259 aa).

Catalysis depends on Lys99, which acts as the Schiff-base intermediate with DXP. 1-deoxy-D-xylulose 5-phosphate is bound by residues Gly161, 187–188, and 209–210; these read AG and NT.

It belongs to the ThiG family. Homotetramer. Forms heterodimers with either ThiH or ThiS.

Its subcellular location is the cytoplasm. It catalyses the reaction [ThiS sulfur-carrier protein]-C-terminal-Gly-aminoethanethioate + 2-iminoacetate + 1-deoxy-D-xylulose 5-phosphate = [ThiS sulfur-carrier protein]-C-terminal Gly-Gly + 2-[(2R,5Z)-2-carboxy-4-methylthiazol-5(2H)-ylidene]ethyl phosphate + 2 H2O + H(+). The protein operates within cofactor biosynthesis; thiamine diphosphate biosynthesis. Functionally, catalyzes the rearrangement of 1-deoxy-D-xylulose 5-phosphate (DXP) to produce the thiazole phosphate moiety of thiamine. Sulfur is provided by the thiocarboxylate moiety of the carrier protein ThiS. In vitro, sulfur can be provided by H(2)S. The protein is Thiazole synthase of Nautilia profundicola (strain ATCC BAA-1463 / DSM 18972 / AmH).